The following is a 117-amino-acid chain: NLYQFKNMIQCANKGSRSWLDYVNYGCYCGWGGSGTPVDELDRCCQTHDNCYDQAGKKGCFPKLTLYSWKCTGNVPTCNSKSGCKDFVCACDAEAAKCFAKAPYKKENFKIDTKTRC.

7 disulfide bridges follow: Cys11-Cys71, Cys27-Cys117, Cys29-Cys45, Cys44-Cys98, Cys51-Cys91, Cys60-Cys84, and Cys78-Cys89. Positions 28, 30, and 32 each coordinate Ca(2+). His48 is a catalytic residue. Asp49 serves as a coordination point for Ca(2+). Asp92 is a catalytic residue.

It belongs to the phospholipase A2 family. Group I subfamily. D49 sub-subfamily. Ca(2+) serves as cofactor. Expressed by the venom gland.

It is found in the secreted. The enzyme catalyses a 1,2-diacyl-sn-glycero-3-phosphocholine + H2O = a 1-acyl-sn-glycero-3-phosphocholine + a fatty acid + H(+). Its function is as follows. PLA2 catalyzes the calcium-dependent hydrolysis of the 2-acyl groups in 3-sn-phosphoglycerides. The chain is Basic phospholipase A2 pseudexin A chain from Pseudechis porphyriacus (Red-bellied black snake).